The chain runs to 362 residues: Chorismate synthase (362 aa).

R46 is a binding site for NADP(+). FMN is bound by residues 121–123 (RAS), 237–238 (NA), G277, 292–296 (KPTPS), and R318.

Belongs to the chorismate synthase family. Homotetramer. FMNH2 is required as a cofactor.

It carries out the reaction 5-O-(1-carboxyvinyl)-3-phosphoshikimate = chorismate + phosphate. Its pathway is metabolic intermediate biosynthesis; chorismate biosynthesis; chorismate from D-erythrose 4-phosphate and phosphoenolpyruvate: step 7/7. Catalyzes the anti-1,4-elimination of the C-3 phosphate and the C-6 proR hydrogen from 5-enolpyruvylshikimate-3-phosphate (EPSP) to yield chorismate, which is the branch point compound that serves as the starting substrate for the three terminal pathways of aromatic amino acid biosynthesis. This reaction introduces a second double bond into the aromatic ring system. The polypeptide is Chorismate synthase (Campylobacter lari (strain RM2100 / D67 / ATCC BAA-1060)).